We begin with the raw amino-acid sequence, 329 residues long: Cytosolic arginine sensor for mTORC1 subunit 1 (329 aa).

Ser-14 is modified (phosphoserine). ACT domains follow at residues 72–138 (AEAT…HTLA) and 260–321 (GELW…EVLQ). L-arginine is bound by residues 111 to 112 (SV), Gly-274, 280 to 281 (IV), and 300 to 304 (TFNFD).

The protein belongs to the GATS family. In terms of assembly, forms homodimers and heterodimers with CASTOR2. Interacts with the GATOR2 complex which is composed of MIOS, SEC13, SEH1L, WDR24 and WDR59; the interaction is negatively regulated by arginine. Interacts with TM4SF5; the interaction is positively regulated by leucine and is negatively regulated by arginine. Post-translationally, phosphorylation at Ser-14 by AKT1, promoting the interaction between CASTOR1 and RNF167. In terms of processing, ubiquitinated by RNF167 via 'Lys-29'-polyubiquitination, leading to its degradation, releasing the GATOR2 complex. Ubiquitination by RNF167 is promoted by phosphorylation at Ser-14 by AKT1.

The protein resides in the cytoplasm. It localises to the cytosol. Functions as an intracellular arginine sensor within the amino acid-sensing branch of the TORC1 signaling pathway. As a homodimer or a heterodimer with CASTOR2, binds and inhibits the GATOR subcomplex GATOR2 and thereby mTORC1. Binding of arginine to CASTOR1 allosterically disrupts the interaction of CASTOR1-containing dimers with GATOR2 which can in turn activate mTORC1 and the TORC1 signaling pathway. This chain is Cytosolic arginine sensor for mTORC1 subunit 1, found in Pongo abelii (Sumatran orangutan).